The sequence spans 176 residues: RNA pyrophosphohydrolase (176 aa).

One can recognise a Nudix hydrolase domain in the interval 6-149 (GYRPNVGIII…KRNVYEMALT (144 aa)). The Nudix box signature appears at 38-59 (GGIKPGESPEAAMYRELMEEVG).

It belongs to the Nudix hydrolase family. RppH subfamily. A divalent metal cation serves as cofactor.

Functionally, accelerates the degradation of transcripts by removing pyrophosphate from the 5'-end of triphosphorylated RNA, leading to a more labile monophosphorylated state that can stimulate subsequent ribonuclease cleavage. The chain is RNA pyrophosphohydrolase from Laribacter hongkongensis (strain HLHK9).